Consider the following 204-residue polypeptide: UPF0637 protein SAB0972c (204 aa).

Belongs to the UPF0637 family.

The protein is UPF0637 protein SAB0972c of Staphylococcus aureus (strain bovine RF122 / ET3-1).